Here is a 265-residue protein sequence, read N- to C-terminus: MEMO1 family protein Mbar_A1422 (265 aa).

Belongs to the MEMO1 family.

In Methanosarcina barkeri (strain Fusaro / DSM 804), this protein is MEMO1 family protein Mbar_A1422.